Reading from the N-terminus, the 175-residue chain is Gamma-crystallin M1 (175 aa).

Beta/gamma crystallin 'Greek key' domains are found at residues 2–40, 41–86, 89–121, and 130–172; these read GKII…RVES, GCFM…RYPY, FRMR…RMSD, and GHWL…RRIT.

Belongs to the beta/gamma-crystallin family. Monomer.

In terms of biological role, crystallins are the dominant structural components of the vertebrate eye lens. This chain is Gamma-crystallin M1 (GM1), found in Chiloscyllium indicum (Slender bamboo shark).